The sequence spans 317 residues: Sulfate adenylyltransferase subunit 2 (317 aa).

Disordered regions lie at residues 1–21 and 298–317; these read MPDSRPDTELSNPQSAKAPLD and RAIDRDQSGSMEKKKREGYF.

It belongs to the PAPS reductase family. CysD subfamily. In terms of assembly, heterodimer composed of CysD, the smaller subunit, and CysN.

The catalysed reaction is sulfate + ATP + H(+) = adenosine 5'-phosphosulfate + diphosphate. It participates in sulfur metabolism; hydrogen sulfide biosynthesis; sulfite from sulfate: step 1/3. Its function is as follows. With CysN forms the ATP sulfurylase (ATPS) that catalyzes the adenylation of sulfate producing adenosine 5'-phosphosulfate (APS) and diphosphate, the first enzymatic step in sulfur assimilation pathway. APS synthesis involves the formation of a high-energy phosphoric-sulfuric acid anhydride bond driven by GTP hydrolysis by CysN coupled to ATP hydrolysis by CysD. This chain is Sulfate adenylyltransferase subunit 2, found in Rhizobium etli (strain ATCC 51251 / DSM 11541 / JCM 21823 / NBRC 15573 / CFN 42).